Reading from the N-terminus, the 282-residue chain is Heat stress transcription factor A-7b (282 aa).

2 stretches are compositionally biased toward low complexity: residues 1 to 11 (MDPSSSSRARS) and 120 to 134 (SSSSPPSLNYSQSQP). Disordered stretches follow at residues 1-24 (MDPSSSSRARSMPPPVPMEGLQEA) and 117-139 (RRTSSSSPPSLNYSQSQPEAHDP). A DNA-binding region spans residues 26–120 (PSPFLTKTFE…LLKSIKRRTS (95 aa)). The tract at residues 137 to 196 (HDPGVELPQLREERHVLMMEISTLRQEEQRARGYVQAMEQRINGAEKKQRHMMSFLRRAV) is hydrophobic repeat HR-A/B. The short motif at 208-212 (QKRDR) is the Nuclear localization signal element. The Nuclear export signal signature appears at 232–240 (LSELEALAL). The AHA signature appears at 259-268 (DGFWEELLMN).

The protein belongs to the HSF family. Class A subfamily. As to quaternary structure, homotrimer. Exhibits temperature-dependent phosphorylation.

The protein localises to the cytoplasm. The protein resides in the nucleus. Functionally, transcriptional activator that specifically binds DNA sequence 5'-AGAAnnTTCT-3' known as heat shock promoter elements (HSE). This Arabidopsis thaliana (Mouse-ear cress) protein is Heat stress transcription factor A-7b (HSFA7B).